Consider the following 448-residue polypeptide: Squalene synthase ERG9 (448 aa).

Residues 428–448 (CNVVLFGIGALILSLIYFVLY) form a helical membrane-spanning segment.

Belongs to the phytoene/squalene synthase family. The cofactor is Mg(2+).

The protein resides in the endoplasmic reticulum membrane. Its subcellular location is the microsome. It carries out the reaction 2 (2E,6E)-farnesyl diphosphate + NADPH + H(+) = squalene + 2 diphosphate + NADP(+). The enzyme catalyses 2 (2E,6E)-farnesyl diphosphate + NADH + H(+) = squalene + 2 diphosphate + NAD(+). It participates in terpene metabolism; lanosterol biosynthesis; lanosterol from farnesyl diphosphate: step 1/3. Squalene synthase; part of the third module of ergosterol biosynthesis pathway that includes the late steps of the pathway. ERG9 produces squalene from 2 farnesyl pyrophosphate moieties. The third module or late pathway involves the ergosterol synthesis itself through consecutive reactions that mainly occur in the endoplasmic reticulum (ER) membrane. Firstly, the squalene synthase ERG9 catalyzes the condensation of 2 farnesyl pyrophosphate moieties to form squalene, which is the precursor of all steroids. Squalene synthase is crucial for balancing the incorporation of farnesyl diphosphate (FPP) into sterol and nonsterol isoprene synthesis. Secondly, the squalene epoxidase ERG1 catalyzes the stereospecific oxidation of squalene to (S)-2,3-epoxysqualene, which is considered to be a rate-limiting enzyme in steroid biosynthesis. Then, the lanosterol synthase ERG7 catalyzes the cyclization of (S)-2,3 oxidosqualene to lanosterol, a reaction that forms the sterol core. In the next steps, lanosterol is transformed to zymosterol through a complex process involving various demethylation, reduction and desaturation reactions. The lanosterol 14-alpha-demethylase ERG11 (also known as CYP51) catalyzes C14-demethylation of lanosterol to produce 4,4'-dimethyl cholesta-8,14,24-triene-3-beta-ol, which is critical for ergosterol biosynthesis. The C-14 reductase ERG24 reduces the C14=C15 double bond of 4,4-dimethyl-cholesta-8,14,24-trienol to produce 4,4-dimethyl-cholesta-8,24-dienol. 4,4-dimethyl-cholesta-8,24-dienol is substrate of the C-4 demethylation complex ERG25-ERG26-ERG27 in which ERG25 catalyzes the three-step monooxygenation required for the demethylation of 4,4-dimethyl and 4alpha-methylsterols, ERG26 catalyzes the oxidative decarboxylation that results in a reduction of the 3-beta-hydroxy group at the C-3 carbon to an oxo group, and ERG27 is responsible for the reduction of the keto group on the C-3. ERG28 has a role as a scaffold to help anchor ERG25, ERG26 and ERG27 to the endoplasmic reticulum and ERG29 regulates the activity of the iron-containing C4-methylsterol oxidase ERG25. Then, the sterol 24-C-methyltransferase ERG6 catalyzes the methyl transfer from S-adenosyl-methionine to the C-24 of zymosterol to form fecosterol. The C-8 sterol isomerase ERG2 catalyzes the reaction which results in unsaturation at C-7 in the B ring of sterols and thus converts fecosterol to episterol. The sterol-C5-desaturase ERG3 then catalyzes the introduction of a C-5 double bond in the B ring to produce 5-dehydroepisterol. The C-22 sterol desaturase ERG5 further converts 5-dehydroepisterol into ergosta-5,7,22,24(28)-tetraen-3beta-ol by forming the C-22(23) double bond in the sterol side chain. Finally, ergosta-5,7,22,24(28)-tetraen-3beta-ol is substrate of the C-24(28) sterol reductase ERG4 to produce ergosterol. The protein is Squalene synthase ERG9 of Candida albicans (strain SC5314 / ATCC MYA-2876) (Yeast).